The chain runs to 254 residues: Ubiquinone/menaquinone biosynthesis C-methyltransferase UbiE (254 aa).

Residues Thr-77, Asp-98, 126 to 127 (NA), and Ser-143 contribute to the S-adenosyl-L-methionine site.

The protein belongs to the class I-like SAM-binding methyltransferase superfamily. MenG/UbiE family.

The enzyme catalyses a 2-demethylmenaquinol + S-adenosyl-L-methionine = a menaquinol + S-adenosyl-L-homocysteine + H(+). The catalysed reaction is a 2-methoxy-6-(all-trans-polyprenyl)benzene-1,4-diol + S-adenosyl-L-methionine = a 5-methoxy-2-methyl-3-(all-trans-polyprenyl)benzene-1,4-diol + S-adenosyl-L-homocysteine + H(+). It participates in quinol/quinone metabolism; menaquinone biosynthesis; menaquinol from 1,4-dihydroxy-2-naphthoate: step 2/2. It functions in the pathway cofactor biosynthesis; ubiquinone biosynthesis. Methyltransferase required for the conversion of demethylmenaquinol (DMKH2) to menaquinol (MKH2) and the conversion of 2-polyprenyl-6-methoxy-1,4-benzoquinol (DDMQH2) to 2-polyprenyl-3-methyl-6-methoxy-1,4-benzoquinol (DMQH2). In Blochmanniella floridana, this protein is Ubiquinone/menaquinone biosynthesis C-methyltransferase UbiE.